We begin with the raw amino-acid sequence, 312 residues long: tRNA dimethylallyltransferase (312 aa).

Residue 19–26 (GPSGSGKS) coordinates ATP. 21–26 (SGSGKS) is a substrate binding site. Residues 44–47 (DSLS) form an interaction with substrate tRNA region.

It belongs to the IPP transferase family. As to quaternary structure, monomer. The cofactor is Mg(2+).

It catalyses the reaction adenosine(37) in tRNA + dimethylallyl diphosphate = N(6)-dimethylallyladenosine(37) in tRNA + diphosphate. Functionally, catalyzes the transfer of a dimethylallyl group onto the adenine at position 37 in tRNAs that read codons beginning with uridine, leading to the formation of N6-(dimethylallyl)adenosine (i(6)A). The sequence is that of tRNA dimethylallyltransferase from Helicobacter pylori (strain J99 / ATCC 700824) (Campylobacter pylori J99).